A 134-amino-acid chain; its full sequence is uncharacterized protein (134 aa).

2 helical membrane passes run 16–36 (IFSFVFDIFLFIFDVIWNTKL) and 43–63 (IAYFLIFFMVIKLSIYAIHGT).

This sequence belongs to the plectrovirus ORF5 family.

Its subcellular location is the host membrane. This is an uncharacterized protein from Spiroplasma citri (SpV1).